A 150-amino-acid chain; its full sequence is Monothiol glutaredoxin-5, mitochondrial (150 aa).

The N-terminal 29 residues, 1–29 (MFLPKFNPIRSFSPILRAKTLLRYQNRMY), are a transit peptide targeting the mitochondrion. Positions 35 to 140 (RKAIEDAIES…DLLEEAQALV (106 aa)) constitute a Glutaredoxin domain. Glutathione is bound at residue Lys-52. Cys-60 is a [2Fe-2S] cluster binding site. Residues 92-96 (REGIK), Ile-104, and 117-118 (CD) each bind glutathione.

Belongs to the glutaredoxin family. Monothiol subfamily. As to quaternary structure, homodimer. Interacts with SSQ1. Interacts with BOL1.

It localises to the mitochondrion matrix. In terms of biological role, monothiol glutaredoxin involved in mitochondrial iron-sulfur (Fe/S) cluster transfer. Receives 2Fe/2S clusters from scaffold protein ISU1 and mediates their transfer to apoproteins, to the 4Fe/FS cluster biosynthesis machinery, or export from mitochondrion. The chain is Monothiol glutaredoxin-5, mitochondrial from Saccharomyces cerevisiae (strain ATCC 204508 / S288c) (Baker's yeast).